A 302-amino-acid chain; its full sequence is Recombination-associated protein RdgC (302 aa).

The protein belongs to the RdgC family.

Its subcellular location is the cytoplasm. The protein localises to the nucleoid. Its function is as follows. May be involved in recombination. This Actinobacillus pleuropneumoniae serotype 3 (strain JL03) protein is Recombination-associated protein RdgC.